The following is a 331-amino-acid chain: POU domain, class 4, transcription factor 3 (331 aa).

Over residues 81–97 the composition is skewed to low complexity; the sequence is TSSSSTVPISHPSSNLP. The segment at 81–108 is disordered; the sequence is TSSSSTVPISHPSSNLPSHHHHHLSHQT. The POU-specific domain maps to 172–249; that stretch reads DVESDPRELE…VLQAWLEEAE (78 aa). Positions 267 to 326 form a DNA-binding region, homeobox; that stretch reads RKRKRTSIAAPEKRSLEAYFAIQPRPSSEKIAAIAEKLDLKKNVVRVWFCNQRQKQKRMK.

Belongs to the POU transcription factor family. Class-4 subfamily. As to quaternary structure, interaction with ISL1. Expressed in the nervous system. Expressed in the otic vesicle during embryogenesis. Expressed in the adult retina in a subset of retinal ganglion cells (RGCs), and at a lower level in the adult tectum. Not expressed in the adult olfactory bulb.

It localises to the nucleus. The protein localises to the cytoplasm. Acts as a transcriptional activator. Acts by binding to sequences related to the consensus octamer motif 5'-ATGCAAAT-3' in the regulatory regions of its target genes. May play a role in specifying terminally differentiated neuronal phenotypes. The sequence is that of POU domain, class 4, transcription factor 3 (pou4f3) from Danio rerio (Zebrafish).